The sequence spans 431 residues: Histidinol dehydrogenase (431 aa).

Positions 130, 191, and 214 each coordinate NAD(+). S237, Q259, and H262 together coordinate substrate. Zn(2+)-binding residues include Q259 and H262. Catalysis depends on proton acceptor residues E327 and H328. Substrate contacts are provided by H328, D361, E415, and H420. D361 provides a ligand contact to Zn(2+). H420 provides a ligand contact to Zn(2+).

This sequence belongs to the histidinol dehydrogenase family. The cofactor is Zn(2+).

The enzyme catalyses L-histidinol + 2 NAD(+) + H2O = L-histidine + 2 NADH + 3 H(+). It functions in the pathway amino-acid biosynthesis; L-histidine biosynthesis; L-histidine from 5-phospho-alpha-D-ribose 1-diphosphate: step 9/9. Functionally, catalyzes the sequential NAD-dependent oxidations of L-histidinol to L-histidinaldehyde and then to L-histidine. This is Histidinol dehydrogenase from Bradyrhizobium diazoefficiens (strain JCM 10833 / BCRC 13528 / IAM 13628 / NBRC 14792 / USDA 110).